The primary structure comprises 346 residues: uncharacterized protein (346 aa).

8 helical membrane-spanning segments follow: residues 15 to 35, 55 to 75, 93 to 113, 139 to 159, 182 to 202, 229 to 249, 269 to 289, and 295 to 315; these read YLRG…LLTV, VEAR…YLFI, ILVL…EALT, ILLL…PLIL, IFTF…YCYV, LGVA…LLLL, LTNY…FHLF, and LQSL…SAMW.

The protein to E.coli YeiB, B.subtilis YxaH and B.subtilis YrkO.

It is found in the cell membrane. Functionally, involved in transport. This is an uncharacterized protein from Bacillus acidopullulyticus.